The chain runs to 180 residues: Oligoribonuclease (180 aa).

The Exonuclease domain occupies 7–170 (LIWIDLEMTG…DDIRESIAEL (164 aa)). The active site involves Y128.

Belongs to the oligoribonuclease family.

It is found in the cytoplasm. Functionally, 3'-to-5' exoribonuclease specific for small oligoribonucleotides. The polypeptide is Oligoribonuclease (Pseudomonas paraeruginosa (strain DSM 24068 / PA7) (Pseudomonas aeruginosa (strain PA7))).